The following is a 1661-amino-acid chain: Pentafunctional AROM polypeptide (1661 aa).

The segment at 1-388 is 3-dehydroquinate synthase; it reads MATNGVKAEP…YEKKASSVVD (388 aa). NAD(+) contacts are provided by residues 50 to 52, 87 to 90, 118 to 120, and aspartate 123; these read DTN, ETSK, and GGV. 7-phospho-2-dehydro-3-deoxy-D-arabino-heptonate is bound at residue arginine 134. 143–144 serves as a coordination point for NAD(+); it reads TT. 7-phospho-2-dehydro-3-deoxy-D-arabino-heptonate-binding residues include aspartate 150 and lysine 156. Lysine 165 is a binding site for NAD(+). 7-phospho-2-dehydro-3-deoxy-D-arabino-heptonate is bound at residue asparagine 166. Residues 183–186 and asparagine 194 contribute to the NAD(+) site; that span reads FLET. Glutamate 198 serves as a coordination point for Zn(2+). 7-phospho-2-dehydro-3-deoxy-D-arabino-heptonate-binding positions include 198-201 and lysine 254; that span reads EVVK. Glutamate 264 acts as the Proton acceptor; for 3-dehydroquinate synthase activity in catalysis. 7-phospho-2-dehydro-3-deoxy-D-arabino-heptonate contacts are provided by residues 268-272 and histidine 275; that span reads RNLLN. Histidine 275 is a Zn(2+) binding site. Residue histidine 279 is the Proton acceptor; for 3-dehydroquinate synthase activity of the active site. 7-phospho-2-dehydro-3-deoxy-D-arabino-heptonate contacts are provided by histidine 291 and lysine 360. Histidine 291 is a binding site for Zn(2+). The segment at 401–850 is EPSP synthase; that stretch reads VHPGIPSDLN…WDILNQQFKA (450 aa). Cysteine 832 (for EPSP synthase activity) is an active-site residue. The segment at 872-1064 is shikimate kinase; sequence QKSIFIIGMR…KKKKQSFFVC (193 aa). Residue 879 to 886 participates in ATP binding; that stretch reads GMRGAGKT. Positions 1065–1285 are 3-dehydroquinase; it reads LSAPNLEPCA…TAPGQLSAAD (221 aa). Histidine 1188 functions as the Proton acceptor; for 3-dehydroquinate dehydratase activity in the catalytic mechanism. Lysine 1216 acts as the Schiff-base intermediate with substrate; for 3-dehydroquinate dehydratase activity in catalysis. Positions 1298-1661 are shikimate dehydrogenase; the sequence is TKKFCIFGSP…LTYSWSLGDW (364 aa).

This sequence in the N-terminal section; belongs to the sugar phosphate cyclases superfamily. Dehydroquinate synthase family. The protein in the 2nd section; belongs to the EPSP synthase family. It in the 3rd section; belongs to the shikimate kinase family. In the 4th section; belongs to the type-I 3-dehydroquinase family. This sequence in the C-terminal section; belongs to the shikimate dehydrogenase family. In terms of assembly, homodimer. Zn(2+) serves as cofactor.

The protein localises to the cytoplasm. It catalyses the reaction 7-phospho-2-dehydro-3-deoxy-D-arabino-heptonate = 3-dehydroquinate + phosphate. The enzyme catalyses 3-dehydroquinate = 3-dehydroshikimate + H2O. The catalysed reaction is shikimate + NADP(+) = 3-dehydroshikimate + NADPH + H(+). It carries out the reaction shikimate + ATP = 3-phosphoshikimate + ADP + H(+). It catalyses the reaction 3-phosphoshikimate + phosphoenolpyruvate = 5-O-(1-carboxyvinyl)-3-phosphoshikimate + phosphate. The protein operates within metabolic intermediate biosynthesis; chorismate biosynthesis; chorismate from D-erythrose 4-phosphate and phosphoenolpyruvate: step 2/7. It functions in the pathway metabolic intermediate biosynthesis; chorismate biosynthesis; chorismate from D-erythrose 4-phosphate and phosphoenolpyruvate: step 3/7. It participates in metabolic intermediate biosynthesis; chorismate biosynthesis; chorismate from D-erythrose 4-phosphate and phosphoenolpyruvate: step 4/7. Its pathway is metabolic intermediate biosynthesis; chorismate biosynthesis; chorismate from D-erythrose 4-phosphate and phosphoenolpyruvate: step 5/7. The protein operates within metabolic intermediate biosynthesis; chorismate biosynthesis; chorismate from D-erythrose 4-phosphate and phosphoenolpyruvate: step 6/7. Functionally, the AROM polypeptide catalyzes 5 consecutive enzymatic reactions in prechorismate polyaromatic amino acid biosynthesis. The polypeptide is Pentafunctional AROM polypeptide (Phaeosphaeria nodorum (strain SN15 / ATCC MYA-4574 / FGSC 10173) (Glume blotch fungus)).